The following is a 416-amino-acid chain: MSAEIICVGTELLLGDILNSNSQFLAKELARLGIPHYYQTVVGDNPSRLKQVIEIASNRASILIFTGGLGPTPDDLTTETIADFFNTPLVERPEIIEDMSRKFAARGRTMTDNNRKQALLPQGADILPNPLGTAPGLLWQPRPNLTLMTFPGVPSEMKRMWQETAIPYLKNQGWGKEIIFSRMLRFRGIGESALAAKVSQFFDLTNPTVAPYASLGEVRLRVSAKTRSEQEAIALIDPVAQELQKIAGLDYYGSDDETLASVVGSVLRQKGETVSVAESCTAGGLGSVLTSVAGSSDYFRGGIIAYDNSVKVDLLGVNSADLEQYGAVSDIVAQQMALGVKQRLGTDWGVSITGVAGPGGGTDTKPVGLVYVGLADSQGKVESFECRFGTERDREMVRSLSAYTALDHLRRKLLVR.

Belongs to the CinA family.

The sequence is that of CinA-like protein from Rippkaea orientalis (strain PCC 8801 / RF-1) (Cyanothece sp. (strain PCC 8801)).